Reading from the N-terminus, the 608-residue chain is Pentatricopeptide repeat-containing protein At5g40410, mitochondrial (608 aa).

The N-terminal 28 residues, 1-28 (MIKANVYSCSKFRFLYRRRFLSQSSFVH), are a transit peptide targeting the mitochondrion. 11 PPR repeats span residues 30-64 (LDAN…VSYR), 65-95 (HGFI…MPER), 96-130 (DLVS…EVGF), 133-167 (NEVT…GVLE), 168-198 (EVKV…LSIK), 199-233 (NLVS…GHEP), 234-268 (DQAT…GFSG), 269-299 (NKCI…ITSP), 300-334 (DSMA…GISP), 335-365 (DHVT…MSKR), and 371-401 (RLDH…MPME). The type E motif stretch occupies residues 406-481 (VWGALLGACR…ASGCSYIEHG (76 aa)). The tract at residues 482–512 (NKIHKFVVGDWSHPESEKIQKKLKEIRKKMK) is type E(+) motif. The tract at residues 514 to 608 (EMGYKSKTEF…DGSCSCSDYW (95 aa)) is type DYW motif.

The protein belongs to the PPR family. PCMP-H subfamily.

Its subcellular location is the mitochondrion. This is Pentatricopeptide repeat-containing protein At5g40410, mitochondrial (PCMP-H15) from Arabidopsis thaliana (Mouse-ear cress).